The sequence spans 396 residues: Stearoyl-[acyl-carrier-protein] 9-desaturase, chloroplastic (396 aa).

The transit peptide at 1–32 (MALKLNPVTTFPSTRSLNNFSSRSPRTFLMAA) directs the protein to the chloroplast. Fe cation is bound by residues Glu-138, Glu-176, His-179, Glu-229, Glu-262, and His-265.

The protein belongs to the fatty acid desaturase type 2 family. Homodimer. It depends on Fe(2+) as a cofactor.

Its subcellular location is the plastid. The protein resides in the chloroplast. It carries out the reaction octadecanoyl-[ACP] + 2 reduced [2Fe-2S]-[ferredoxin] + O2 + 2 H(+) = (9Z)-octadecenoyl-[ACP] + 2 oxidized [2Fe-2S]-[ferredoxin] + 2 H2O. Its pathway is lipid metabolism; fatty acid metabolism. Its function is as follows. Converts stearoyl-ACP to oleoyl-ACP by introduction of a cis double bond between carbons 9 and 10 of the acyl chain. The chain is Stearoyl-[acyl-carrier-protein] 9-desaturase, chloroplastic from Linum usitatissimum (Flax).